The sequence spans 222 residues: Type II restriction enzyme MjaI (222 aa).

The catalysed reaction is Endonucleolytic cleavage of DNA to give specific double-stranded fragments with terminal 5'-phosphates.. A P subtype restriction enzyme that recognizes the double-stranded sequence 5'-CTAG-3'; the cleavage site is unknown. This is Type II restriction enzyme MjaI (mjaIR) from Methanocaldococcus jannaschii (strain ATCC 43067 / DSM 2661 / JAL-1 / JCM 10045 / NBRC 100440) (Methanococcus jannaschii).